We begin with the raw amino-acid sequence, 247 residues long: MAGHSKWANIKFRKGVQDAKRGKIFTKLIREITVAARMGGGDESSNPRLRDAVKKALNANMKRDTIDNAVKRGVGGADGEAMIAMRYEGYGPGGVAILVDCLSDNKNRTVSEVRHAFSKHGGNLGTDGSVSYLFTNQGEILMASNQPEDKVMEIAIDAGASDVAVEDSQIEIITPVEAYHTVLNALQDAALEVEQSHLTMRAQTLVPISDETAESLIKLIDMLEDLDDVQEVYSNAEFSEKILESMN.

Belongs to the TACO1 family.

It is found in the cytoplasm. In Legionella pneumophila (strain Lens), this protein is Probable transcriptional regulatory protein lpl1249.